Here is a 534-residue protein sequence, read N- to C-terminus: EH domain-containing protein 1 (534 aa).

The residue at position 1 (Met1) is an N-acetylmethionine. The 232-residue stretch at 55-286 (FDNKPMVLLV…DLFKDIQSLP (232 aa)) folds into the Dynamin-type G domain. The interval 65–72 (GQYSTGKT) is G1 motif. Position 65–72 (65–72 (GQYSTGKT)) interacts with ATP. The tract at residues 91 to 92 (EP) is G2 motif. Positions 153–156 (DTPG) are G3 motif. The stretch at 198–227 (DEFSEVIKALKNHEDKIRVVLNKADQIETQ) forms a coiled coil. Residues 219–222 (NKAD) are G4 motif. Residue Lys220 participates in ATP binding. A region of interest (G5 motif) is located at residue Ile243. Trp258 is a binding site for ATP. Phosphoserine is present on residues Ser355 and Ser456. The EH domain maps to 444–532 (DKPTYDEIFY…PHLIPPSKRR (89 aa)). Residues 476-511 (LPNTVLGKIWKLADVDKDGLLDDEEFALANHLIKVK) form the EF-hand domain. 4 residues coordinate Ca(2+): Asp489, Asp491, Asp493, and Glu500.

The protein belongs to the TRAFAC class dynamin-like GTPase superfamily. Dynamin/Fzo/YdjA family. EHD subfamily. Homooligomer, and heterooligomer with EHD2, EHD3 and EHD4, ATP-binding is required for heterooligomerization. Interacts (via EH domain) with MICALL1 (via NPF1 motif); the interaction is direct and recruits EHD1 to membranes. Interacts with RAB35; the interaction is indirect through MICALL1 and recruits EHD1 to membranes. Interacts (via EH domain) with PACSIN2 (via NPF motifs); regulates localization to tubular recycling endosome membranes. Interacts with PACSIN1. Interacts with RAB8A. Interacts with FER1L5 (via second C2 domain). Interacts with MYOF. Interacts with ZFYVE20. Interacts (via EH domain) with RAB11FIP2.

The protein localises to the recycling endosome membrane. Its subcellular location is the early endosome membrane. It is found in the cell membrane. It localises to the cell projection. The protein resides in the cilium membrane. Its function is as follows. ATP- and membrane-binding protein that controls membrane reorganization/tubulation upon ATP hydrolysis. In vitro causes vesiculation of endocytic membranes. Acts in early endocytic membrane fusion and membrane trafficking of recycling endosomes. Recruited to endosomal membranes upon nerve growth factor stimulation, indirectly regulates neurite outgrowth. Plays a role in myoblast fusion. Involved in the unidirectional retrograde dendritic transport of endocytosed BACE1 and in efficient sorting of BACE1 to axons implicating a function in neuronal APP processing. Plays a role in the formation of the ciliary vesicle (CV), an early step in cilium biogenesis. Proposed to be required for the fusion of distal appendage vesicles (DAVs) to form the CV by recruiting SNARE complex component SNAP29. Is required for recruitment of transition zone proteins CEP290, RPGRIP1L, TMEM67 and B9D2, and of IFT20 following DAV reorganization before Rab8-dependent ciliary membrane extension. Required for the loss of CCP110 form the mother centriole essential for the maturation of the basal body during ciliogenesis. This chain is EH domain-containing protein 1, found in Rattus norvegicus (Rat).